The primary structure comprises 170 residues: NADH-quinone oxidoreductase subunit B (170 aa).

[4Fe-4S] cluster-binding residues include C37, C38, C102, and C131.

Belongs to the complex I 20 kDa subunit family. NDH-1 is composed of 14 different subunits. Subunits NuoB, C, D, E, F, and G constitute the peripheral sector of the complex. [4Fe-4S] cluster serves as cofactor.

The protein resides in the cell inner membrane. The enzyme catalyses a quinone + NADH + 5 H(+)(in) = a quinol + NAD(+) + 4 H(+)(out). Its function is as follows. NDH-1 shuttles electrons from NADH, via FMN and iron-sulfur (Fe-S) centers, to quinones in the respiratory chain. The immediate electron acceptor for the enzyme in this species is believed to be ubiquinone. Couples the redox reaction to proton translocation (for every two electrons transferred, four hydrogen ions are translocated across the cytoplasmic membrane), and thus conserves the redox energy in a proton gradient. In Geotalea uraniireducens (strain Rf4) (Geobacter uraniireducens), this protein is NADH-quinone oxidoreductase subunit B.